The chain runs to 126 residues: Glycine cleavage system H protein (126 aa).

The Lipoyl-binding domain maps to 21–103 (TVTIGISEHA…YEGGWIVKVK (83 aa)). Residue lysine 62 is modified to N6-lipoyllysine.

The protein belongs to the GcvH family. The glycine cleavage system is composed of four proteins: P, T, L and H. (R)-lipoate serves as cofactor.

Its function is as follows. The glycine cleavage system catalyzes the degradation of glycine. The H protein shuttles the methylamine group of glycine from the P protein to the T protein. This is Glycine cleavage system H protein from Vibrio parahaemolyticus serotype O3:K6 (strain RIMD 2210633).